Here is a 400-residue protein sequence, read N- to C-terminus: MSLDNFSKGALAISGETTLLYQDIARSVQKEKGIKIVNFGIGQPDFPTFQKIRDEAKKALDGGFTAYTSAYGIDELRAKIASFLSSKYNTNISSKEVIITPGAKVSLYLAFLLYVNPGDEVIIFDPSYYSYPEVVKMLGGKPVYVKMKWREDTGFSLNLNDLENKITDKTKMVVLNNPHNPTGMVFDPKEIDQLIEIAKSKNLIVLSDEIYDYFVYEGKMRSVLEDPDWKNFSIYVNGFSKTFSMTGWRLGYVVAKENVIKKMSEIAANVYTCPTSFAQKAAVSAFDTFDDVKKMIDTFKKRRDVMYSELKKIKGIQVNKSQGAFYMFPYLGEILRKSGMSTKDFSVNLIKEKGVVTIPGEVFPLDAGKEFVRLSFAVDENVIKEGVQRMSEFINQLMRS.

The L-aspartate site is built by G42 and N180. K241 carries the post-translational modification N6-(pyridoxal phosphate)lysine. R373 is a binding site for L-aspartate.

This sequence belongs to the class-I pyridoxal-phosphate-dependent aminotransferase family. Homodimer. Pyridoxal 5'-phosphate serves as cofactor.

The protein resides in the cytoplasm. The enzyme catalyses L-aspartate + 2-oxoglutarate = oxaloacetate + L-glutamate. This chain is Aspartate aminotransferase (aspC), found in Sulfolobus acidocaldarius (strain ATCC 33909 / DSM 639 / JCM 8929 / NBRC 15157 / NCIMB 11770).